We begin with the raw amino-acid sequence, 360 residues long: Phenylalanine--tRNA ligase alpha subunit (360 aa).

Residue E260 coordinates Mg(2+).

Belongs to the class-II aminoacyl-tRNA synthetase family. Phe-tRNA synthetase alpha subunit type 1 subfamily. Tetramer of two alpha and two beta subunits. It depends on Mg(2+) as a cofactor.

The protein resides in the cytoplasm. It carries out the reaction tRNA(Phe) + L-phenylalanine + ATP = L-phenylalanyl-tRNA(Phe) + AMP + diphosphate + H(+). This Bartonella tribocorum (strain CIP 105476 / IBS 506) protein is Phenylalanine--tRNA ligase alpha subunit.